We begin with the raw amino-acid sequence, 54 residues long: Large ribosomal subunit protein bL33 (54 aa).

It belongs to the bacterial ribosomal protein bL33 family.

The chain is Large ribosomal subunit protein bL33 from Herpetosiphon aurantiacus (strain ATCC 23779 / DSM 785 / 114-95).